Consider the following 511-residue polypeptide: MSVELWQQCVELLRDELPAQQFNTWIRPLQVEAEGDELRVYAPNRFVLDWVNEKYLGRLLELLGENGSGIAPALSLLIGSRRSSAPRAAPNAPVSAAMAASLAQTHAQPAAAPVMAVADPVSVPTAEPAQASDMAEASSRDSYDSMADSAPAPVAPGRTEQRNVQVEGALKHTSYLNRTFTFETFVEGKSNQLARAAAWQVADNPKHGYNPLFLYGGVGLGKTHLMHAVGNHLLKKNPNAKVVYLHSERFVADMVKALQLNAINEFKRFYRSVDALLIDDIQFFARKERSQEEFFHTFNALLEGGQQVILTSDRYPKEIEGLEERLKSRFGWGLTVAVEPPELETRVAILMKKADQAKVELPHDAAFFIAQRIRSNVRELEGALKRVIAHSHFMGRDITIELIRESLKDLLALQDKLVSVDNIQRTVAEYYKIKISDLLSKRRSRSVARPRQVAMALSKELTNHSLPEIGDMFGGRDHTTVLHACRKINELKESDADIREDYKNLLRTLTT.

Positions 1–90 are domain I, interacts with DnaA modulators; it reads MSVELWQQCV…RRSSAPRAAP (90 aa). The segment at 91–174 is domain II; that stretch reads NAPVSAAMAA…QVEGALKHTS (84 aa). Residues 125–161 form a disordered region; the sequence is TAEPAQASDMAEASSRDSYDSMADSAPAPVAPGRTEQ. The domain III, AAA+ region stretch occupies residues 175-391; sequence YLNRTFTFET…GALKRVIAHS (217 aa). Residues Gly-219, Gly-221, Lys-222, and Thr-223 each coordinate ATP. The interval 392–511 is domain IV, binds dsDNA; it reads HFMGRDITIE…YKNLLRTLTT (120 aa).

The protein belongs to the DnaA family. As to quaternary structure, oligomerizes as a right-handed, spiral filament on DNA at oriC.

It localises to the cytoplasm. In terms of biological role, plays an essential role in the initiation and regulation of chromosomal replication. ATP-DnaA binds to the origin of replication (oriC) to initiate formation of the DNA replication initiation complex once per cell cycle. Binds the DnaA box (a 9 base pair repeat at the origin) and separates the double-stranded (ds)DNA. Forms a right-handed helical filament on oriC DNA; dsDNA binds to the exterior of the filament while single-stranded (ss)DNA is stabiized in the filament's interior. The ATP-DnaA-oriC complex binds and stabilizes one strand of the AT-rich DNA unwinding element (DUE), permitting loading of DNA polymerase. After initiation quickly degrades to an ADP-DnaA complex that is not apt for DNA replication. Binds acidic phospholipids. The protein is Chromosomal replication initiator protein DnaA of Pseudomonas putida (strain W619).